The sequence spans 216 residues: Ras-related protein Rab11C (216 aa).

19–26 contributes to the GTP binding site; sequence GDSGVGKS. Residues 41-49 carry the Effector region motif; it reads SKSTIGVEF. GTP-binding positions include 67–71 and 125–128; these read DTAGQ and NKSD. 2 S-geranylgeranyl cysteine lipidation sites follow: Cys213 and Cys214.

It belongs to the small GTPase superfamily. Rab family.

The protein resides in the cell membrane. The sequence is that of Ras-related protein Rab11C (RAB11C) from Lotus japonicus (Lotus corniculatus var. japonicus).